Reading from the N-terminus, the 430-residue chain is Enolase (430 aa).

Q167 serves as a coordination point for (2R)-2-phosphoglycerate. E209 acts as the Proton donor in catalysis. Residues D246, E289, and D316 each contribute to the Mg(2+) site. Residues K341, R370, S371, and K392 each coordinate (2R)-2-phosphoglycerate. K341 functions as the Proton acceptor in the catalytic mechanism.

It belongs to the enolase family. In terms of assembly, component of the RNA degradosome, a multiprotein complex involved in RNA processing and mRNA degradation. Mg(2+) is required as a cofactor.

Its subcellular location is the cytoplasm. The protein localises to the secreted. It localises to the cell surface. It catalyses the reaction (2R)-2-phosphoglycerate = phosphoenolpyruvate + H2O. It participates in carbohydrate degradation; glycolysis; pyruvate from D-glyceraldehyde 3-phosphate: step 4/5. Its function is as follows. Catalyzes the reversible conversion of 2-phosphoglycerate (2-PG) into phosphoenolpyruvate (PEP). It is essential for the degradation of carbohydrates via glycolysis. This chain is Enolase, found in Idiomarina loihiensis (strain ATCC BAA-735 / DSM 15497 / L2-TR).